A 173-amino-acid chain; its full sequence is Translationally-controlled tumor protein homolog (173 aa).

Residues 1–173 (MIIFKDMITG…FKHGLEEEKV (173 aa)) form the TCTP domain.

The protein belongs to the TCTP family. As to expression, expressed by the venom gland.

Its subcellular location is the secreted. Venom protein that causes edema, enhances vascular permeability and is likely related to the inflammatory activity of the venom. The chain is Translationally-controlled tumor protein homolog from Grammostola rosea (Chilean rose tarantula).